A 137-amino-acid chain; its full sequence is Structural protein A137R (137 aa).

It belongs to the asfivirus A137R family. Interacts with host TBK1.

The protein resides in the virion. The protein localises to the host cytoplasm. In terms of biological role, plays a role in the inhibition of the host innate immune response. Mechanistically, promotes the autophagy-mediated lysosomal degradation of host TBK1 and affects IRF3 nuclear translocation to block type I IFN production. In African swine fever virus (isolate Warthog/Namibia/Wart80/1980) (ASFV), this protein is Structural protein A137R.